Consider the following 131-residue polypeptide: Classical arabinogalactan protein 2 (131 aa).

The first 21 residues, 1 to 21, serve as a signal peptide directing secretion; it reads MNSKAMQALIFLGFLATSCLA. The residue at position 22 (glutamine 22) is a Pyrrolidone carboxylic acid. Proline 24, proline 26, proline 28, proline 34, and proline 35 each carry 4-hydroxyproline. 5 O-linked (Ara...) hydroxyproline glycosylation sites follow: proline 24, proline 26, proline 28, proline 34, and proline 35. The interval 24–106 is disordered; it reads PAPAPTTVTP…PGPDGAADAP (83 aa). Composition is skewed to pro residues over residues 25-38 and 49-64; these read APAPTTVTPPPTAL and IASPPVPVNEPTPAPT. Composition is skewed to low complexity over residues 65–76 and 90–106; these read TSPTTSPVASPP and TPTSSPAPGPDGAADAP. A lipid anchor (GPI-anchor amidated serine) is attached at serine 107. Residues 108–131 constitute a propeptide, removed in mature form; it reads AAWANKAFLVGTAVAGALYAVVLA.

Belongs to the classical AGP family. In terms of processing, O-glycosylated on hydroxyprolines; noncontiguous hydroxylproline residues are glycosylated with arabinogalactan.

It localises to the cell membrane. In terms of biological role, proteoglycan that seems to be implicated in diverse developmental roles such as differentiation, cell-cell recognition, embryogenesis and programmed cell death. This Arabidopsis thaliana (Mouse-ear cress) protein is Classical arabinogalactan protein 2 (AGP2).